Reading from the N-terminus, the 359-residue chain is MLYQLALLLKDYWFAFNVLKYITFRSFTAVLIAFFLTLVLSPSFINRLRKIQRLFGGYVREYTPESHEVKKYTPTMGGIVILIVVTLSTLLLMRWDIKYTWVVLLSFLSFGTIGFWDDYVKLKNKKGISIKTKFLLQVLSASLISVLIYYWADIDTILYFPFFKELYVDLGVLYLPFAVFVIVGSANAVNLTDGLDGLAIGPAMTTATALGVVAYAVGHSKIAQYLNIPYVPYAGELTVFCFALVGAGLGFLWFNSFPAQMFMGDVGSLSIGASLATVALLTKSEFIFAVAAGVFVFETISVILQIIYFRWTGGKRLFKRAPFHHHLELNGLPEPKIVVRMWIISILLAIIAISMLKLR.

Over 1–25 (MLYQLALLLKDYWFAFNVLKYITFR) the chain is Periplasmic. Residues 26–48 (SFTAVLIAFFLTLVLSPSFINRL) traverse the membrane as a helical segment. The Cytoplasmic portion of the chain corresponds to 49–74 (RKIQRLFGGYVREYTPESHEVKKYTP). Residues Lys-70 and Thr-75 each contribute to the muraymycin D2 site. The helical transmembrane segment at 75–92 (TMGGIVILIVVTLSTLLL) threads the bilayer. Residues 93–98 (MRWDIK) lie on the Periplasmic side of the membrane. The helical transmembrane segment at 99 to 120 (YTWVVLLSFLSFGTIGFWDDYV) threads the bilayer. The Cytoplasmic portion of the chain corresponds to 121–130 (KLKNKKGISI). Residues 131 to 152 (KTKFLLQVLSASLISVLIYYWA) traverse the membrane as a helical segment. Residues 153–172 (DIDTILYFPFFKELYVDLGV) lie on the Periplasmic side of the membrane. The chain crosses the membrane as a helical span at residues 173 to 194 (LYLPFAVFVIVGSANAVNLTDG). Residues Asn-190, Asp-193, and Asp-196 each coordinate muraymycin D2. The Cytoplasmic segment spans residues 195–197 (LDG). A helical transmembrane segment spans residues 198-218 (LAIGPAMTTATALGVVAYAVG). Over 219 to 233 (HSKIAQYLNIPYVPY) the chain is Periplasmic. Residues 234–255 (AGELTVFCFALVGAGLGFLWFN) traverse the membrane as a helical segment. Over 256–264 (SFPAQMFMG) the chain is Cytoplasmic. Gly-264 and Ser-268 together coordinate muraymycin D2. A helical membrane pass occupies residues 265–280 (DVGSLSIGASLATVAL). Over 281–284 (LTKS) the chain is Periplasmic. Residues 285-310 (EFIFAVAAGVFVFETISVILQIIYFR) form a helical membrane-spanning segment. Residues Gln-305 and Ala-321 each contribute to the muraymycin D2 site. Residues 311–332 (WTGGKRLFKRAPFHHHLELNGL) lie on the Cytoplasmic side of the membrane. Residues 333 to 355 (PEPKIVVRMWIISILLAIIAISM) traverse the membrane as a helical segment. Over 356–359 (LKLR) the chain is Periplasmic.

It belongs to the glycosyltransferase 4 family. MraY subfamily. Homodimer. The cofactor is Mg(2+). Requires Mn(2+) as cofactor.

It localises to the cell inner membrane. It carries out the reaction UDP-N-acetyl-alpha-D-muramoyl-L-alanyl-gamma-D-glutamyl-meso-2,6-diaminopimeloyl-D-alanyl-D-alanine + di-trans,octa-cis-undecaprenyl phosphate = di-trans,octa-cis-undecaprenyl diphospho-N-acetyl-alpha-D-muramoyl-L-alanyl-D-glutamyl-meso-2,6-diaminopimeloyl-D-alanyl-D-alanine + UMP. Its pathway is cell wall biogenesis; peptidoglycan biosynthesis. With respect to regulation, inhibited by natural nucleoside antibiotics including tunicamycin, capuramycin and muraymycin. Usually the cofactor magnesium is not required for antibiotic binding. In terms of biological role, catalyzes the initial step of the lipid cycle reactions in the biosynthesis of the cell wall peptidoglycan: transfers peptidoglycan precursor phospho-MurNAc-pentapeptide from UDP-MurNAc-pentapeptide onto the lipid carrier undecaprenyl phosphate, yielding undecaprenyl-pyrophosphoryl-MurNAc-pentapeptide, known as lipid I. This Aquifex aeolicus (strain VF5) protein is Phospho-N-acetylmuramoyl-pentapeptide-transferase.